The chain runs to 131 residues: Large ribosomal subunit protein mL60 (131 aa).

Residues 1-12 constitute a mitochondrion transit peptide; it reads MFGPFKLTSPVA.

It belongs to the mitochondrion-specific ribosomal protein mL60 family. Component of the mitochondrial large ribosomal subunit (mt-LSU). Mature yeast 74S mitochondrial ribosomes consist of a small (37S) and a large (54S) subunit. The 37S small subunit contains a 15S ribosomal RNA (15S mt-rRNA) and 34 different proteins. The 54S large subunit contains a 21S rRNA (21S mt-rRNA) and 46 different proteins.

The protein localises to the mitochondrion. In terms of biological role, component of the mitochondrial ribosome (mitoribosome), a dedicated translation machinery responsible for the synthesis of mitochondrial genome-encoded proteins, including at least some of the essential transmembrane subunits of the mitochondrial respiratory chain. The mitoribosomes are attached to the mitochondrial inner membrane and translation products are cotranslationally integrated into the membrane. The sequence is that of Large ribosomal subunit protein mL60 (MRPL31) from Saccharomyces cerevisiae (strain ATCC 204508 / S288c) (Baker's yeast).